We begin with the raw amino-acid sequence, 91 residues long: Histone H1, sperm (91 aa).

The segment at 1–25 (PGSPQKRAASPRKSPRKGSPKKSPM) is disordered. Over residues 9–20 (ASPRKSPRKGSP) the composition is skewed to basic residues. The H15 domain maps to 18-91 (GSPKKSPMIR…TGATGRFRVG (74 aa)).

Belongs to the histone H1/H5 family.

It localises to the nucleus. The protein localises to the chromosome. In terms of biological role, histones H1 are necessary for the condensation of nucleosome chains into higher-order structures. In Sphaerechinus granularis (Purple sea urchin), this protein is Histone H1, sperm.